A 702-amino-acid chain; its full sequence is MNSLFASTARGLEELLKTELEKLGAVGCQVVQGGVHFQGDTRLIYQSLMWSRLASRIILPMGECKVYSDLDLYLGVQAINWTEIFNPGATFAVHFSGLNDTIRNSQYGAMKVKDAIVDAFTRKNLPRPNVDRESPDLRINVWLNKETASIALDLSGDGLHLRGYRDRTGLAPIKETLAAAIVMRSGWQPGTPLLDPMCGSGTLLIEAAMWATDRAPGLHRGHWGFSGWAQHDEAIWQEVKAEAQTRARKGLAEYSSHFYGSDSDARVIERARSNARRAGIGELITFEVKDVAQLSNPLPKGPYGTVISNPPYGERLDSEPALIALHSLLGRTMKNQFGGWNLSLFSASPDLLGSLQLRADKQFKAKNGPLDCVQKNYHIAETTADSKPATVAEDYANRLRKNLKKLEKWARQEGIECYRLYDADLPEYNVAVDRYGDWAVIQEYAPPKTVDAQKARQRLFDIIAATLSVLGIPPNKLVLKTRERQKGKNQYQKMSEKGEFLEVSEYNARLWVNLTDYLDTGLFLDHRIARRMLGEMSKGKDFLNLFSYTGSASVHAGLGGARSTTTVDMSRTYLEWAERNLRLNGLSGRAHRLIQADCLGWLREANEQFDLIFIDPPTFSNSKRMEESFDVQRDHVALMKDLKRLLRKGGTIMFSNNKRGFRMDLEGLAELGLTAQEITQKTLSPDFARNRQIHNCWLIRAA.

The THUMP domain maps to 43-154; it reads LIYQSLMWSR…KETASIALDL (112 aa).

This sequence belongs to the methyltransferase superfamily. RlmKL family.

It localises to the cytoplasm. It catalyses the reaction guanosine(2445) in 23S rRNA + S-adenosyl-L-methionine = N(2)-methylguanosine(2445) in 23S rRNA + S-adenosyl-L-homocysteine + H(+). It carries out the reaction guanosine(2069) in 23S rRNA + S-adenosyl-L-methionine = N(2)-methylguanosine(2069) in 23S rRNA + S-adenosyl-L-homocysteine + H(+). Specifically methylates the guanine in position 2445 (m2G2445) and the guanine in position 2069 (m7G2069) of 23S rRNA. The protein is Ribosomal RNA large subunit methyltransferase K/L of Salmonella schwarzengrund (strain CVM19633).